The primary structure comprises 278 residues: 1-acyl-sn-glycerol-3-phosphate acyltransferase beta (278 aa).

A signal peptide spans 1–23 (MELWPCLAAALLLLLLLVQLSRA). The Lumenal portion of the chain corresponds to 24 to 29 (AEFYAK). A helical membrane pass occupies residues 30 to 50 (VALYCALCFTVSAVASLVCLL). Topologically, residues 51–121 (RHGGRTVENM…PERCVQIAKR (71 aa)) are cytoplasmic. The HXXXXD motif motif lies at 98 to 103 (HQSILD). Residues 122–142 (ELLFLGPVGLIMYLGGVFFIN) form a helical membrane-spanning segment. At 143 to 278 (RQRSSTAMTV…TAGSGVQPAQ (136 aa)) the chain is on the lumenal side. The short motif at 172–175 (EGTR) is the EGTR motif element.

This sequence belongs to the 1-acyl-sn-glycerol-3-phosphate acyltransferase family. Expressed predominantly in adipose tissue, pancreas and liver.

It is found in the endoplasmic reticulum membrane. The enzyme catalyses a 1-acyl-sn-glycero-3-phosphate + an acyl-CoA = a 1,2-diacyl-sn-glycero-3-phosphate + CoA. The catalysed reaction is 1-(9Z-octadecenoyl)-sn-glycero-3-phosphate + (9Z)-octadecenoyl-CoA = 1,2-di-(9Z-octadecenoyl)-sn-glycero-3-phosphate + CoA. It carries out the reaction 1-(9Z-octadecenoyl)-sn-glycero-3-phosphate + hexadecanoyl-CoA = 1-(9Z)-octadecenoyl-2-hexadecanoyl-sn-glycero-3-phosphate + CoA. It catalyses the reaction heptadecanoyl-CoA + 1-(9Z-octadecenoyl)-sn-glycero-3-phosphate = 1-(9Z)-octadecenoyl-2-heptadecanoyl-sn-glycero-3-phosphate + CoA. The enzyme catalyses 1-(9Z-octadecenoyl)-sn-glycero-3-phosphate + (9Z,12Z)-octadecadienoyl-CoA = 1-(9Z)-octadecenoyl-2-(9Z,12Z)-octadecadienoyl-sn-glycero-3-phosphate + CoA. The catalysed reaction is 1-(9Z-octadecenoyl)-sn-glycero-3-phosphate + tetradecanoyl-CoA = 1-(9Z)-octadecenoyl-2-tetradecanoyl-sn-glycero-3-phosphate + CoA. It carries out the reaction pentadecanoyl-CoA + 1-(9Z-octadecenoyl)-sn-glycero-3-phosphate = 1-(9Z)-octadecenoyl-2-pentadecanoyl-sn-glycero-3-phosphate + CoA. It catalyses the reaction 1-hexadecanoyl-sn-glycero-3-phosphate + (9Z)-octadecenoyl-CoA = 1-hexadecanoyl-2-(9Z-octadecenoyl)-sn-glycero-3-phosphate + CoA. The enzyme catalyses 1-tetradecanoyl-sn-glycerol 3-phosphate + (9Z)-octadecenoyl-CoA = 1-tetradecanoyl-2-(9Z)-octadecenoyl-sn-glycero-3-phosphate + CoA. The catalysed reaction is 1-(9Z,12Z,15Z)-octadecatrienoyl-sn-glycero-3-phosphate + (9Z)-octadecenoyl-CoA = 1-(9Z,12Z,15Z)-octadecatrienoyl-2-(9Z)-octadecenoyl-sn-glycero-3-phosphate + CoA. It carries out the reaction 1-(6Z,9Z,12Z-octadecatrienoyl)-sn-glycero-3-phosphate + (9Z)-octadecenoyl-CoA = (6Z,9Z,12Z)-octadecatrienoyl-2-(9Z)-octadecenoyl-sn-glycero-3-phosphate + CoA. It catalyses the reaction 1-eicosanoyl-sn-glycero-3-phosphate + (9Z)-octadecenoyl-CoA = 1-eicosanoyl-2-(9Z)-octadecenoyl-sn-glycero-3-phosphate + CoA. The enzyme catalyses 1-hexadecanoyl-sn-glycero-3-phosphate + octadecanoyl-CoA = 1-hexadecanoyl-2-octadecanoyl-sn-glycero-3-phosphate + CoA. The catalysed reaction is 1-hexadecanoyl-sn-glycero-3-phosphate + (5Z,8Z,11Z,14Z)-eicosatetraenoyl-CoA = 1-hexadecanoyl-2-(5Z,8Z,11Z,14Z-eicosatetraenoyl)-sn-glycero-3-phosphate + CoA. It carries out the reaction 1-hexadecanoyl-sn-glycero-3-phosphate + hexadecanoyl-CoA = 1,2-dihexadecanoyl-sn-glycero-3-phosphate + CoA. It catalyses the reaction 1-hexadecanoyl-sn-glycero-3-phosphate + tetradecanoyl-CoA = 1-hexadecanoyl-2-tetradecanoyl-sn-glycero-3-phosphate + CoA. The enzyme catalyses (11Z)-octadecenoyl-CoA + 1-(9Z-octadecenoyl)-sn-glycero-3-phosphate = 1-(9Z)-octadecenoyl-2-(11Z)-octadecenoyl-sn-glycero-3-phosphate + CoA. It functions in the pathway phospholipid metabolism; CDP-diacylglycerol biosynthesis; CDP-diacylglycerol from sn-glycerol 3-phosphate: step 2/3. Converts 1-acyl-sn-glycerol-3-phosphate (lysophosphatidic acid or LPA) into 1,2-diacyl-sn-glycerol-3-phosphate (phosphatidic acid or PA) by incorporating an acyl moiety at the sn-2 position of the glycerol backbone. This chain is 1-acyl-sn-glycerol-3-phosphate acyltransferase beta (AGPAT2), found in Homo sapiens (Human).